The sequence spans 181 residues: Large ribosomal subunit protein bL17 (181 aa).

Over residues 141-159 the composition is skewed to low complexity; the sequence is KAASATAESAPVATANDAA. Positions 141–181 are disordered; sequence KAASATAESAPVATANDAAPAEEAEVQGVKDPAEDCEAKAD. Residues 171-181 are compositionally biased toward basic and acidic residues; that stretch reads DPAEDCEAKAD.

The protein belongs to the bacterial ribosomal protein bL17 family. As to quaternary structure, part of the 50S ribosomal subunit. Contacts protein L32.

The sequence is that of Large ribosomal subunit protein bL17 from Geotalea daltonii (strain DSM 22248 / JCM 15807 / FRC-32) (Geobacter daltonii).